We begin with the raw amino-acid sequence, 569 residues long: Alpha-amylase (569 aa).

The N-terminal stretch at 1–28 (MARKTVAAALALVAGAAVAVTGNAPAQA) is a signal peptide. Ca(2+) contacts are provided by asparagine 120, glutamine 166, and aspartate 175. Catalysis depends on aspartate 205, which acts as the Nucleophile. Histidine 209 is a binding site for Ca(2+). Glutamate 232 functions as the Proton donor in the catalytic mechanism. Positions 468–569 (TTPPATSGAS…QLVLNDTFRS (102 aa)) constitute a CBM20 domain.

The protein belongs to the glycosyl hydrolase 13 family. In terms of assembly, monomer. The cofactor is Ca(2+).

It catalyses the reaction Endohydrolysis of (1-&gt;4)-alpha-D-glucosidic linkages in polysaccharides containing three or more (1-&gt;4)-alpha-linked D-glucose units.. The polypeptide is Alpha-amylase (aml) (Streptomyces violaceus (Streptomyces venezuelae)).